Reading from the N-terminus, the 264-residue chain is MKAVVLTVAVLFLTGSQARHFWQQDEPQSSWDRIKDFATVYLDAVKDSGRDYVTQFETSALGKQLNLKLLDNWDSLSSTVSKVREQIGPVSQDFWDKLEKDTVSLRQEMNKDLEEVKRKVQPYLDEFQKRWQEDVERYRQQVEPLSKELREGARQKLLELHEKLSPLGQEMRDRARTHVDALRTHLAPYSDELRQRLAARLEALKEGSSFAEYQAKATEHLSALGEKAKPALEDLRQGLLPVLESLKLSFWSAVDEATKKLNTQ.

The first 18 residues, 1 to 18, serve as a signal peptide directing secretion; that stretch reads MKAVVLTVAVLFLTGSQA. 2 consecutive repeat copies span residues 67–88 and 89–110. The 10 X approximate tandem repeats stretch occupies residues 67–264; it reads LKLLDNWDSL…DEATKKLNTQ (198 aa). Methionine sulfoxide is present on Met109. One copy of the 3; half-length repeat lies at 111–121; that stretch reads KDLEEVKRKVQ. Repeat copies occupy residues 122–143, 144–165, and 166–187. A 7; truncated repeat occupies 188-207; it reads PYSDELRQRLAARLEALKEG. Repeat 8 spans residues 208–229; the sequence is SSFAEYQAKATEHLSALGEKAK. The stretch at 230-240 is one 9; half-length repeat; it reads PALEDLRQGLL. Repeat unit 10 spans residues 241 to 264; sequence PVLESLKLSFWSAVDEATKKLNTQ.

Belongs to the apolipoprotein A1/A4/E family. As to quaternary structure, homodimer. Interacts with APOA1BP and CLU. Component of a sperm activating protein complex (SPAP), consisting of APOA1, an immunoglobulin heavy chain, an immunoglobulin light chain and albumin. Interacts with NDRG1. Interacts with SCGB3A2. Interacts with NAXE and YJEFN3. Glycosylated. Post-translationally, palmitoylated. In terms of processing, phosphorylation sites are present in the extracellular medium.

It is found in the secreted. Participates in the reverse transport of cholesterol from tissues to the liver for excretion by promoting cholesterol efflux from tissues and by acting as a cofactor for the lecithin cholesterol acyltransferase (LCAT). As part of the SPAP complex, activates spermatozoa motility. The polypeptide is Apolipoprotein A-I (APOA1) (Ictidomys tridecemlineatus (Thirteen-lined ground squirrel)).